We begin with the raw amino-acid sequence, 562 residues long: Glutamine--tRNA ligase (562 aa).

The 'HIGH' region motif lies at 35 to 45 (PEPNGYLHIGH). ATP is bound by residues 36–38 (EPN) and 42–48 (HIGHAKS). Aspartate 68 and tyrosine 213 together coordinate L-glutamine. Residues threonine 232 and 264–265 (RL) each bind ATP. The 'KMSKS' region signature appears at 271 to 275 (ITSKR).

The protein belongs to the class-I aminoacyl-tRNA synthetase family. In terms of assembly, monomer.

Its subcellular location is the cytoplasm. The catalysed reaction is tRNA(Gln) + L-glutamine + ATP = L-glutaminyl-tRNA(Gln) + AMP + diphosphate. The polypeptide is Glutamine--tRNA ligase (Neisseria meningitidis serogroup A / serotype 4A (strain DSM 15465 / Z2491)).